A 373-amino-acid polypeptide reads, in one-letter code: MTSALCSKSTAPHTLSDDVADLSHSNTMALACTANSVVTLKNEAQLDEFMANYGQDTQYSQPLFVLSGGSNVLLPAKLNAIVLRPQMRGIQVTSQTDSHVDIEVMAGENWHDLVLHTVAQGWYGLENLALIPGLTGAAPIQNIGAYGVQLEDCLQYVRAYHFPSQTWHDLTAVDCEFGYRDSIFKRQPNTWLISRVGFRLHTDATKVLASYGDVQTVAQGYAMKQSRTKPTPADVMHAIIDIRQQKLPDPKQLPNCGSFFQNPIIPQDQFTALQSSYPAIVGYPMPDAMIKVAAGWLIEQAGLKGGGIEPIVTHQQQALVLTNHTPYQATQKEVAAAQQYITDTVYERFAIPLSREPVWVNADGSIGYDKHVV.

The 174-residue stretch at 30 to 203 folds into the FAD-binding PCMH-type domain; the sequence is LACTANSVVT…SRVGFRLHTD (174 aa). Arg180 is a catalytic residue. Ser258 acts as the Proton donor in catalysis. The active site involves Glu356.

The protein belongs to the MurB family. The cofactor is FAD.

The protein localises to the cytoplasm. It catalyses the reaction UDP-N-acetyl-alpha-D-muramate + NADP(+) = UDP-N-acetyl-3-O-(1-carboxyvinyl)-alpha-D-glucosamine + NADPH + H(+). It functions in the pathway cell wall biogenesis; peptidoglycan biosynthesis. In terms of biological role, cell wall formation. The chain is UDP-N-acetylenolpyruvoylglucosamine reductase from Psychrobacter arcticus (strain DSM 17307 / VKM B-2377 / 273-4).